Reading from the N-terminus, the 139-residue chain is Thiosulfate:glutathione sulfurtransferase (139 aa).

Ser26 is subject to Phosphoserine. Residues 37-138 (HDPNVVLVDV…WVSHGGDKLD (102 aa)) form the Rhodanese domain. Cys98 (cysteine persulfide intermediate) is an active-site residue.

Its subcellular location is the mitochondrion. It carries out the reaction thiosulfate + glutathione = S-sulfanylglutathione + sulfite + H(+). GSS(-) is a potent inhibitor of RDL1, since the presence of the sulfur dioxygenase strongly increases the RDL1 catalytic activity. In terms of biological role, thiosulfate:glutathione sulfurtransferase (TST) required to produce S-sulfanylglutathione (GSS(-)), a central intermediate in hydrogen sulfide metabolism. Provides the link between the first step in H(2)S metabolism performed by the sulfide:quinone oxidoreductase (SQOR) which catalyzes the conversion of H(2)S to thiosulfate, and the sulfur dioxygenase (SDO) which uses GSS(-) as substrate. The thermodynamic coupling of the irreversible SDO and reversible TST reactions provides a model for the physiologically relevant reaction with thiosulfate as the sulfane donor. The polypeptide is Thiosulfate:glutathione sulfurtransferase (RDL1) (Saccharomyces cerevisiae (strain ATCC 204508 / S288c) (Baker's yeast)).